The following is a 340-amino-acid chain: Biotin synthase (340 aa).

The Radical SAM core domain maps to 47–269 (SELQLSQLLS…VAVARIVCPK (223 aa)). Residues cysteine 62, cysteine 66, and cysteine 69 each coordinate [4Fe-4S] cluster. [2Fe-2S] cluster contacts are provided by cysteine 106, cysteine 137, cysteine 197, and arginine 273.

It belongs to the radical SAM superfamily. Biotin synthase family. As to quaternary structure, homodimer. [4Fe-4S] cluster is required as a cofactor. [2Fe-2S] cluster serves as cofactor.

The catalysed reaction is (4R,5S)-dethiobiotin + (sulfur carrier)-SH + 2 reduced [2Fe-2S]-[ferredoxin] + 2 S-adenosyl-L-methionine = (sulfur carrier)-H + biotin + 2 5'-deoxyadenosine + 2 L-methionine + 2 oxidized [2Fe-2S]-[ferredoxin]. It functions in the pathway cofactor biosynthesis; biotin biosynthesis; biotin from 7,8-diaminononanoate: step 2/2. In terms of biological role, catalyzes the conversion of dethiobiotin (DTB) to biotin by the insertion of a sulfur atom into dethiobiotin via a radical-based mechanism. The chain is Biotin synthase from Caulobacter sp. (strain K31).